A 147-amino-acid chain; its full sequence is MKEETFYLVREDVLPDAMRKTLEVKKLLDRKKAESVADAVQKVDLSRSAFYKYRDAVFPFYTMVKEQIITLFFHLEDRSGALSQLLQAVADSGSNVLSIHQTIPLQGRANVTLSISTSAMEENIHTLMNKLRKFDFIEKVEILGSGA.

An ACT domain is found at 70 to 145 (TLFFHLEDRS…FIEKVEILGS (76 aa)).

Belongs to the UPF0735 family.

This Bacillus velezensis (strain DSM 23117 / BGSC 10A6 / LMG 26770 / FZB42) (Bacillus amyloliquefaciens subsp. plantarum) protein is UPF0735 ACT domain-containing protein RBAM_024960.